The sequence spans 747 residues: Cysteine--tRNA ligase, cytoplasmic (747 aa).

Residues 1-26 form a disordered region; the sequence is MTESWEQGKGRRTQPPWSAPNTNEQP. The span at 15-25 shows a compositional bias: polar residues; the sequence is PPWSAPNTNEQ. C54 lines the Zn(2+) pocket. Residue G55 participates in L-cysteine binding. Positions 56–66 match the 'HIGH' region motif; the sequence is PTVYDASHMGH. T95 contacts L-cysteine. The 'KIIK' region motif lies at 100–103; it reads KIIK. The Zn(2+) site is built by C347, H372, and E376. H372 lines the L-cysteine pocket. Residues 405–409 carry the 'KMSKS' region motif; that stretch reads KMSKS. K408 provides a ligand contact to ATP. The segment covering 651–683 has biased composition (basic and acidic residues); it reads EEKRKAEEEKQRKKEEAARKKQQQEAAKLEKMK. Disordered regions lie at residues 651 to 685 and 700 to 721; these read EEKR…MKIS and FDES…GQTK.

It belongs to the class-I aminoacyl-tRNA synthetase family. As to quaternary structure, homodimer. Requires Zn(2+) as cofactor.

It is found in the cytoplasm. The enzyme catalyses tRNA(Cys) + L-cysteine + ATP = L-cysteinyl-tRNA(Cys) + AMP + diphosphate. In terms of biological role, catalyzes the ATP-dependent ligation of cysteine to tRNA(Cys). In Xenopus laevis (African clawed frog), this protein is Cysteine--tRNA ligase, cytoplasmic (cars1).